A 108-amino-acid polypeptide reads, in one-letter code: MMKGQLAGLMKQAQQMQENMKKMQEQLALIEVEGQSGAGLVKVTMTCRNEVRRVAIDPSLLADDKDMLEDLVAAAFNDAVRKAEATSQEKMSGMTSGLPLPPGFKLPF.

Residues 84–108 (EATSQEKMSGMTSGLPLPPGFKLPF) are disordered. The span at 85-95 (ATSQEKMSGMT) shows a compositional bias: polar residues. Over residues 99–108 (PLPPGFKLPF) the composition is skewed to pro residues.

The protein belongs to the YbaB/EbfC family. As to quaternary structure, homodimer.

The protein resides in the cytoplasm. It is found in the nucleoid. Its function is as follows. Binds to DNA and alters its conformation. May be involved in regulation of gene expression, nucleoid organization and DNA protection. This is Nucleoid-associated protein BMASAVP1_A1850 from Burkholderia mallei (strain SAVP1).